A 163-amino-acid polypeptide reads, in one-letter code: MPSFDTVLETDLVKVKNAVENTAKEIGTRFDFKGTAASAELKEKDKEIILIGDGDFQIEQIHDILRNKLTKAGVDVRFLDIGKVEKIGGDKVKQITKVRDGIETEEAKKIQQLIKGNKMKVQAAIQEGKVRVTGAKRDDLQAAMALIRAEIKDLPLSFDNFRD.

Belongs to the YajQ family.

Its function is as follows. Nucleotide-binding protein. The polypeptide is Nucleotide-binding protein Pnap_1080 (Polaromonas naphthalenivorans (strain CJ2)).